We begin with the raw amino-acid sequence, 97 residues long: Co-chaperonin GroES (97 aa).

Belongs to the GroES chaperonin family. Heptamer of 7 subunits arranged in a ring. Interacts with the chaperonin GroEL.

The protein localises to the cytoplasm. Together with the chaperonin GroEL, plays an essential role in assisting protein folding. The GroEL-GroES system forms a nano-cage that allows encapsulation of the non-native substrate proteins and provides a physical environment optimized to promote and accelerate protein folding. GroES binds to the apical surface of the GroEL ring, thereby capping the opening of the GroEL channel. The protein is Co-chaperonin GroES of Yersinia pseudotuberculosis serotype O:1b (strain IP 31758).